The primary structure comprises 1224 residues: Coatomer subunit alpha (1224 aa).

WD repeat units follow at residues 3 to 38 (TKFE…LWDY), 42 to 80 (TLID…VWNY), 84 to 122 (RCLF…VWNW), and 126 to 164 (TCVC…VWDI). Phosphoserine is present on Ser173. Thr185 is modified (phosphothreonine). 3 WD repeats span residues 195–234 (AVVK…IWRM), 241–278 (EVDT…VWDM), and 282–319 (TGVQ…VFKL). Ser402 is subject to Phosphoserine. Thr591 carries the post-translational modification Phosphothreonine. A Phosphoserine modification is found at Ser895. Position 965 is an omega-N-methylarginine (Arg965). At Ser1193 the chain carries Phosphoserine.

In terms of assembly, oligomeric complex that consists of at least the alpha, beta, beta', gamma, delta, epsilon and zeta subunits. Interacts with SCYL1. Interacts with JAGN1. Interacts with TMEM41B. Interacts with SVEP1. Probably interacts with PEX11A. As to expression, uniformly expressed in a wide range of adult and fetal tissues. Xenin is found in gastric, duodenal and jejunal mucosa. Circulates in the blood. Seems to be confined to specific endocrine cells.

The protein resides in the cytoplasm. The protein localises to the golgi apparatus membrane. It is found in the cytoplasmic vesicle. It localises to the COPI-coated vesicle membrane. Its subcellular location is the secreted. Functionally, the coatomer is a cytosolic protein complex that binds to dilysine motifs and reversibly associates with Golgi non-clathrin-coated vesicles, which further mediate biosynthetic protein transport from the ER, via the Golgi up to the trans Golgi network. Coatomer complex is required for budding from Golgi membranes, and is essential for the retrograde Golgi-to-ER transport of dilysine-tagged proteins. In mammals, the coatomer can only be recruited by membranes associated to ADP-ribosylation factors (ARFs), which are small GTP-binding proteins; the complex also influences the Golgi structural integrity, as well as the processing, activity, and endocytic recycling of LDL receptors. Xenin stimulates exocrine pancreatic secretion. It inhibits pentagastrin-stimulated secretion of acid, to induce exocrine pancreatic secretion and to affect small and large intestinal motility. In the gut, xenin interacts with the neurotensin receptor. This chain is Coatomer subunit alpha (COPA), found in Homo sapiens (Human).